We begin with the raw amino-acid sequence, 562 residues long: TBC1 domain family member 24 (562 aa).

A 1,2-diacyl-sn-glycero-3-phospho-(1D-myo-inositol) is bound by residues Lys36, Arg40, Lys238, Arg242, and 293–297; that span reads RLFSR. Residues 42 to 259 form the Rab-GAP TBC domain; that stretch reads GHWAKSHSLR…FFHKVRGGQP (218 aa). The 213-residue stretch at 337-549 folds into the TLDc domain; the sequence is EIVSVKEMRD…ISIIEVWGFK (213 aa). Positions 451 to 464 are enriched in low complexity; that stretch reads ASSGDNDANSSQSA. A disordered region spans residues 451-471; it reads ASSGDNDANSSQSAKDGIDPS.

Interacts with ARF6.

Its subcellular location is the cell membrane. It is found in the cytoplasm. The protein localises to the cytoplasmic vesicle membrane. The protein resides in the presynapse. Functionally, may act as a GTPase-activating protein for Rab family protein(s). Involved in neuronal projections development, probably through a negative modulation of ARF6 function. Involved in the regulation of synaptic vesicle trafficking. This chain is TBC1 domain family member 24 (tbc1d24), found in Xenopus tropicalis (Western clawed frog).